The sequence spans 305 residues: T-cell immunoglobulin and mucin domain-containing protein 2 (305 aa).

The signal sequence occupies residues 1 to 21 (MNQIQVFISGLILLLPGAVES). Residues 22-125 (HTAVQGLAGH…AFHFVDYMLE (104 aa)) enclose the Ig-like V-type domain. Residues 22–231 (HTAVQGLAGH…QKPQKNLNKG (210 aa)) lie on the Extracellular side of the membrane. 3 cysteine pairs are disulfide-bonded: Cys37/Cys109, Cys50/Cys61, and Cys56/Cys108. N-linked (GlcNAc...) asparagine glycans are attached at residues Asn86 and Asn91. The interval 130 to 174 (ISTSPPTRPTATGRPTTISTRSTHVPTSTRVSTSTSPTPAHTETY) is disordered. Low complexity predominate over residues 131-167 (STSPPTRPTATGRPTTISTRSTHVPTSTRVSTSTSPT). The chain crosses the membrane as a helical span at residues 232 to 252 (FYVGISIAALLILMLLSTMVI). At 253–305 (TRYVVMKRKSESLSFVAFPISKIGASPKKVVERTRCEDQVYIIEDTPYPEEES) the chain is on the cytoplasmic side.

The protein belongs to the immunoglobulin superfamily. TIM family. Homodimer. In terms of tissue distribution, expressed on late differentiated Th2 cells. Expressed also on all splenic B-cells, with increased levels on germinal center B-cells, in the liver, especially in bile duct epithelial cells, and in renal tubule cells. Within retina, mainly expressed in Mueller cells.

Its subcellular location is the cell membrane. Functionally, cell surface glycoprotein that participates in iron homeostasis in the liver, the kidney, the retina and oligodendrocytes by acting as a receptor of H-ferritin. Mechanistically, mediates iron-containing ferritin uptake via an endocytic pathway, trafficking to endosomes and subsequently to lysosomes. Plays also an important role in the regulation of Th2 immunity. Receptor for SEMA4A involved in the regulation of T-cell function, enhancing T-cell activation. The polypeptide is T-cell immunoglobulin and mucin domain-containing protein 2 (Timd2) (Mus musculus (Mouse)).